Reading from the N-terminus, the 242-residue chain is Ribonuclease 3 (242 aa).

The RNase III domain maps to 7-136 (LEALQNLLGY…LLASIYLDGG (130 aa)). Residue Glu-49 participates in Mg(2+) binding. Residue Asp-53 is part of the active site. Mg(2+) is bound by residues Asp-122 and Glu-125. The active site involves Glu-125. Residues 167 to 236 (DYKTQLQELT…AEKALQIIAA (70 aa)) form the DRBM domain.

Belongs to the ribonuclease III family. As to quaternary structure, homodimer. Mg(2+) serves as cofactor.

It is found in the cytoplasm. It carries out the reaction Endonucleolytic cleavage to 5'-phosphomonoester.. Functionally, digests double-stranded RNA. Involved in the processing of primary rRNA transcript to yield the immediate precursors to the large and small rRNAs (23S and 16S). Processes some mRNAs, and tRNAs when they are encoded in the rRNA operon. Processes pre-crRNA and tracrRNA of type II CRISPR loci if present in the organism. This Syntrophobacter fumaroxidans (strain DSM 10017 / MPOB) protein is Ribonuclease 3.